A 504-amino-acid chain; its full sequence is ATP synthase subunit alpha, chloroplastic (504 aa).

170–177 lines the ATP pocket; the sequence is GDRQTGKT.

It belongs to the ATPase alpha/beta chains family. In terms of assembly, F-type ATPases have 2 components, CF(1) - the catalytic core - and CF(0) - the membrane proton channel. CF(1) has five subunits: alpha(3), beta(3), gamma(1), delta(1), epsilon(1). CF(0) has four main subunits: a, b, b' and c.

The protein resides in the plastid. Its subcellular location is the chloroplast thylakoid membrane. The enzyme catalyses ATP + H2O + 4 H(+)(in) = ADP + phosphate + 5 H(+)(out). In terms of biological role, produces ATP from ADP in the presence of a proton gradient across the membrane. The alpha chain is a regulatory subunit. The sequence is that of ATP synthase subunit alpha, chloroplastic from Porphyra purpurea (Red seaweed).